A 428-amino-acid polypeptide reads, in one-letter code: 3-phosphoshikimate 1-carboxyvinyltransferase (428 aa).

Positions 22, 23, and 27 each coordinate 3-phosphoshikimate. Residue lysine 22 coordinates phosphoenolpyruvate. Glycine 96 and arginine 124 together coordinate phosphoenolpyruvate. 3-phosphoshikimate contacts are provided by serine 169, serine 170, glutamine 171, serine 197, aspartate 313, asparagine 336, and lysine 340. Position 171 (glutamine 171) interacts with phosphoenolpyruvate. The Proton acceptor role is filled by aspartate 313. 3 residues coordinate phosphoenolpyruvate: arginine 344, arginine 386, and lysine 411.

It belongs to the EPSP synthase family. In terms of assembly, monomer.

The protein localises to the cytoplasm. The enzyme catalyses 3-phosphoshikimate + phosphoenolpyruvate = 5-O-(1-carboxyvinyl)-3-phosphoshikimate + phosphate. It participates in metabolic intermediate biosynthesis; chorismate biosynthesis; chorismate from D-erythrose 4-phosphate and phosphoenolpyruvate: step 6/7. Its function is as follows. Catalyzes the transfer of the enolpyruvyl moiety of phosphoenolpyruvate (PEP) to the 5-hydroxyl of shikimate-3-phosphate (S3P) to produce enolpyruvyl shikimate-3-phosphate and inorganic phosphate. The polypeptide is 3-phosphoshikimate 1-carboxyvinyltransferase (Xenorhabdus nematophila (strain ATCC 19061 / DSM 3370 / CCUG 14189 / LMG 1036 / NCIMB 9965 / AN6)).